The primary structure comprises 521 residues: MSL complex subunit 3 (521 aa).

In terms of domain architecture, Tudor-knot spans 13–71 (SGEKVLCFEPDPTKARVLYDAKIVDVIVGKDEKGRKIPEYLIHFNGWNRSWDRWAAEDH). 2 disordered regions span residues 114-166 (KGLP…TRRE) and 298-409 (ATST…PSKE). Residues 139 to 149 (KDEEISEESDI) are compositionally biased toward acidic residues. Positions 150 to 166 (EEKTEVKEEPELQTRRE) are enriched in basic and acidic residues. The 350-residue stretch at 168 to 517 (EERTITIEIP…CEAHYSTKNP (350 aa)) folds into the MRG domain. The interval 290 to 440 (FFLPIKESAT…WKLVPDNYPP (151 aa)) is required for the histone acetyltransferase activity of the MSL complex. Phosphoserine is present on residues S309 and S311. A compositionally biased stretch (low complexity) spans 316–329 (NPSTPQSTESQPTT). Residues S367 and S400 each carry the phosphoserine modification. Position 405 is a phosphothreonine (T405). Phosphoserine is present on residues S407 and S411.

In terms of assembly, component of the MSL histone acetyltransferase complex at least composed of the KAT8/MOF, MSL1/hampin, MSL2 and MSL3. Interacts (via the MRG domain) with MSL1 and KAT8/MOF. Expressed in many tissues including liver, pancreas, heart, lung, kidney, skeletal muscle, brain, and placenta, with highest expression in skeletal muscle and heart.

It is found in the nucleus. In terms of biological role, non-catalytic component of the MSL histone acetyltransferase complex, a multiprotein complex that mediates the majority of histone H4 acetylation at 'Lys-16' (H4K16ac), an epigenetic mark that prevents chromatin compaction. The MSL complex is required for chromosome stability and genome integrity by maintaining homeostatic levels of H4K16ac. The MSL complex is also involved in gene dosage by promoting up-regulation of genes expressed by the X chromosome. X up-regulation is required to compensate for autosomal biallelic expression. The MSL complex also participates in gene dosage compensation by promoting expression of Tsix non-coding RNA. Acts as a histone reader that specifically recognizes and binds histone H4 monomethylated at 'Lys-20' (H4K20Me1) in a DNA-dependent manner and is proposed to be involved in chromosomal targeting of the MSL complex. May play a role X inactivation in females. This Homo sapiens (Human) protein is MSL complex subunit 3.